The primary structure comprises 935 residues: Inter-alpha-trypsin inhibitor heavy chain H2 (935 aa).

An N-terminal signal peptide occupies residues 1-18 (MKGLTCFLLCFLLSEAQG). A propeptide spanning residues 19–53 (FEIPTNGLSEFAEYGDLAELALGKFHVVPGNRRSQ) is cleaved from the precursor. The VIT domain occupies 45-174 (VVPGNRRSQE…KVQFELHYQE (130 aa)). An N-linked (GlcNAc...) asparagine glycan is attached at Asn107. A 4-carboxyglutamate modification is found at Glu271. In terms of domain architecture, VWFA spans 297 to 457 (PKNILFVIDV…YDFLKRLSND (161 aa)). Residue Asn434 is glycosylated (N-linked (GlcNAc...) asparagine). Phosphoserine is present on Ser455. Aspartate 1-(chondroitin 4-sulfate)-ester is present on Asp691. A propeptide spanning residues 692-935 (PHFIIYLPRS…PLLYSFLKRP (244 aa)) is cleaved from the precursor. At Ser875 the chain carries Phosphoserine.

The protein belongs to the ITIH family. I-alpha-I plasma protease inhibitors are assembled from one or two heavy chains (HC) and one light chain, bikunin. Inter-alpha-inhibitor (I-alpha-I) is composed of ITIH1/HC1, ITIH2/HC2 and bikunin. In terms of processing, heavy chains are linked to bikunin via chondroitin 4-sulfate esterified to the alpha-carboxyl of the C-terminal aspartate after propeptide cleavage. Phosphorylated by FAM20C in the extracellular medium.

The protein localises to the secreted. May act as a carrier of hyaluronan in serum or as a binding protein between hyaluronan and other matrix protein, including those on cell surfaces in tissues to regulate the localization, synthesis and degradation of hyaluronan which are essential to cells undergoing biological processes. The chain is Inter-alpha-trypsin inhibitor heavy chain H2 (ITIH2) from Sus scrofa (Pig).